A 334-amino-acid polypeptide reads, in one-letter code: Anthranilate phosphoribosyltransferase (334 aa).

5-phospho-alpha-D-ribose 1-diphosphate is bound by residues Gly-79, 82 to 83 (GD), Ser-87, 89 to 92 (NIST), 107 to 115 (KHGNRSISS), and Ser-119. Gly-79 provides a ligand contact to anthranilate. Ser-91 is a binding site for Mg(2+). Asn-110 is a binding site for anthranilate. Residue Arg-165 coordinates anthranilate. The Mg(2+) site is built by Asp-224 and Glu-225.

Belongs to the anthranilate phosphoribosyltransferase family. As to quaternary structure, homodimer. Requires Mg(2+) as cofactor.

It catalyses the reaction N-(5-phospho-beta-D-ribosyl)anthranilate + diphosphate = 5-phospho-alpha-D-ribose 1-diphosphate + anthranilate. The protein operates within amino-acid biosynthesis; L-tryptophan biosynthesis; L-tryptophan from chorismate: step 2/5. Its function is as follows. Catalyzes the transfer of the phosphoribosyl group of 5-phosphorylribose-1-pyrophosphate (PRPP) to anthranilate to yield N-(5'-phosphoribosyl)-anthranilate (PRA). This chain is Anthranilate phosphoribosyltransferase, found in Streptococcus sanguinis (strain SK36).